Reading from the N-terminus, the 706-residue chain is Glutamine-dependent NAD(+) synthetase (706 aa).

The 271-residue stretch at 5–275 (VTVATCALNQ…VEVLTATLDL (271 aa)) folds into the CN hydrolase domain. E45 acts as the Proton acceptor; for glutaminase activity in catalysis. The active-site For glutaminase activity is the K114. C175 (nucleophile; for glutaminase activity) is an active-site residue. Residues 325–706 (YHSPAEEISL…RQRQELDGVD (382 aa)) form a ligase region. 355–362 (PLSGGVDS) is a binding site for ATP. Residue S357 is part of the active site.

In the C-terminal section; belongs to the NAD synthetase family. In terms of assembly, homohexamer.

The catalysed reaction is deamido-NAD(+) + L-glutamine + ATP + H2O = L-glutamate + AMP + diphosphate + NAD(+) + H(+). It functions in the pathway cofactor biosynthesis; NAD(+) biosynthesis; NAD(+) from deamido-NAD(+) (L-Gln route): step 1/1. Its function is as follows. Catalyzes the ATP-dependent amidation of deamido-NAD to form NAD. Uses L-glutamine as a nitrogen source. In Bos taurus (Bovine), this protein is Glutamine-dependent NAD(+) synthetase (NADSYN1).